Reading from the N-terminus, the 506-residue chain is Chromodomain Y-like protein 2 (506 aa).

The Chromo domain occupies 7-67; that stretch reads YEVERIVDKR…LHMSKDKRIK (61 aa). Residues 64–177 are disordered; that stretch reads KRIKSGKQSS…RHFGNGSHQP (114 aa). The segment covering 88-98 has biased composition (basic and acidic residues); the sequence is KLSHRPSDPGK. Positions 101–120 are enriched in basic residues; sequence GTSHKRKRINPPLAKPKKGY. Positions 133–143 are enriched in polar residues; sequence KTVSYRTTPSG.

In terms of assembly, interacts (via chromo domain) with histone H3K9me3. As to expression, ubiquitously expressed.

It is found in the nucleus. The chain is Chromodomain Y-like protein 2 (CDYL2) from Homo sapiens (Human).